The sequence spans 156 residues: MTDETRQGRLILIDGDACPVKEEIYTCAYRHKIPVRLVAASYLRHPDHPLITMVMAGDAFDAADDVIAEAAAPGTLVVTGDILLAERCLEAGSVVLNHKGGAYTANSIGAQVATRAIMADIRAGLDGQGIGGQKPFSKADRSAFSNALETALRRLK.

It belongs to the UPF0178 family.

In Jannaschia sp. (strain CCS1), this protein is UPF0178 protein Jann_2168.